The primary structure comprises 147 residues: Hemoglobin subunit gamma (147 aa).

In terms of domain architecture, Globin spans 3–147; that stretch reads HFTEEDKATI…VASALSSRYH (145 aa). The heme b site is built by histidine 64 and histidine 93.

This sequence belongs to the globin family. In terms of assembly, heterotetramer of two alpha chains and two gamma chains in fetal hemoglobin (Hb F). As to expression, red blood cells.

Functionally, gamma chains make up the fetal hemoglobin F, in combination with alpha chains. This is Hemoglobin subunit gamma (HBG) from Macaca fuscata fuscata (Japanese macaque).